A 604-amino-acid polypeptide reads, in one-letter code: Sulfite reductase [NADPH] flavoprotein alpha-component (604 aa).

The Flavodoxin-like domain occupies 66 to 204 (VTVLSASQTG…SANAWTDNIA (139 aa)). Residues 72–77 (SQTGNA), 119–122 (STQG), and 155–164 (LGDSSYPNFC) contribute to the FMN site. Residues 239-453 (AAPFPAALLA…VERNDGFRLP (215 aa)) enclose the FAD-binding FR-type domain. FAD-binding positions include T327, Q361, 391–394 (RLYS), 409–411 (TVG), and 424–427 (GGAS). Residues 524-525 (SR), 530-534 (KIYVQ), and D566 contribute to the NADP(+) site. Position 604 (Y604) interacts with FAD.

Belongs to the NADPH-dependent sulphite reductase flavoprotein subunit CysJ family. It in the N-terminal section; belongs to the flavodoxin family. The protein in the C-terminal section; belongs to the flavoprotein pyridine nucleotide cytochrome reductase family. In terms of assembly, alpha(8)-beta(8). The alpha component is a flavoprotein, the beta component is a hemoprotein. FAD is required as a cofactor. FMN serves as cofactor.

The catalysed reaction is hydrogen sulfide + 3 NADP(+) + 3 H2O = sulfite + 3 NADPH + 4 H(+). It participates in sulfur metabolism; hydrogen sulfide biosynthesis; hydrogen sulfide from sulfite (NADPH route): step 1/1. Component of the sulfite reductase complex that catalyzes the 6-electron reduction of sulfite to sulfide. This is one of several activities required for the biosynthesis of L-cysteine from sulfate. The flavoprotein component catalyzes the electron flow from NADPH -&gt; FAD -&gt; FMN to the hemoprotein component. This chain is Sulfite reductase [NADPH] flavoprotein alpha-component, found in Neisseria meningitidis serogroup B (strain ATCC BAA-335 / MC58).